The primary structure comprises 336 residues: Flavonoid 6-O-methyltransferase 4 (336 aa).

S-adenosyl-L-methionine-binding residues include Tyr140 and Asp203. His241 serves as the catalytic Proton acceptor.

This sequence belongs to the class I-like SAM-binding methyltransferase superfamily. Cation-independent O-methyltransferase family. As to quaternary structure, homodimer. As to expression, expressed in leaves.

It carries out the reaction ladanein + S-adenosyl-L-methionine = salvigenin + S-adenosyl-L-homocysteine + H(+). The catalysed reaction is scutellarein 7-methyl ether + S-adenosyl-L-methionine = cirsimaritin + S-adenosyl-L-homocysteine + H(+). Its pathway is flavonoid metabolism. In terms of biological role, flavonoid 6-O-methyltransferase involved in the biosynthesis of polymethoxylated flavonoids natural products such as nevadensin and salvigenin (SALV), aroma compounds which contribute to the flavor of sweet basil, and exhibit pharmacological activities such as anti-allergic, anti-oxidant, antibacterial, anti-proliferative, and anti-inflammatory effects. Catalyzes S-adenosylmethionine-dependent regioselective 6-O-methylation of flavonoids; active on various hydroxylated flavonoid substrates, including scutellarein-7-methyl ether (SCU7Me) and ladanein (LAD). The protein is Flavonoid 6-O-methyltransferase 4 of Ocimum basilicum (Sweet basil).